We begin with the raw amino-acid sequence, 264 residues long: Occludin/ELL domain-containing protein 1 (264 aa).

Polar residues predominate over residues 1-10 (MHNPDGSASP). The interval 1 to 112 (MHNPDGSASP…QPGPHKAKTK (112 aa)) is disordered. The span at 96-105 (PRPPCQPQPG) shows a compositional bias: pro residues. An OCEL domain is found at 147–257 (PDYELKYPPV…QIQKFDDQGD (111 aa)).

The protein belongs to the ELL/occludin family.

In Homo sapiens (Human), this protein is Occludin/ELL domain-containing protein 1 (OCEL1).